A 1011-amino-acid chain; its full sequence is Probable beta-galactosidase E (1011 aa).

The signal sequence occupies residues 1–19 (MKSLLKRLIALAAAYSVAA). Residues Tyr92, Asn136, Ala137, Glu138, and Asn195 each coordinate substrate. Glu196 functions as the Proton donor in the catalytic mechanism. Residue Asn202 is glycosylated (N-linked (GlcNAc...) asparagine). Tyr261 provides a ligand contact to substrate. An intrachain disulfide couples Cys267 to Cys316. Glu299 serves as the catalytic Nucleophile. Tyr365 is a substrate binding site. N-linked (GlcNAc...) asparagine glycosylation is found at Asn406, Asn423, Asn446, Asn455, Asn588, Asn622, Asn704, Asn745, Asn759, Asn772, Asn778, and Asn913.

It belongs to the glycosyl hydrolase 35 family.

It localises to the secreted. It catalyses the reaction Hydrolysis of terminal non-reducing beta-D-galactose residues in beta-D-galactosides.. Cleaves beta-linked terminal galactosyl residues from gangliosides, glycoproteins, and glycosaminoglycans. In Aspergillus fumigatus (strain CBS 144.89 / FGSC A1163 / CEA10) (Neosartorya fumigata), this protein is Probable beta-galactosidase E (lacE).